The chain runs to 504 residues: Cobyric acid synthase (504 aa).

The GATase cobBQ-type domain occupies 251 to 448 (DITIAIVQLP…LHGLFDSDAF (198 aa)). C332 acts as the Nucleophile in catalysis. H440 is an active-site residue.

It belongs to the CobB/CobQ family. CobQ subfamily.

Its pathway is cofactor biosynthesis; adenosylcobalamin biosynthesis. Its function is as follows. Catalyzes amidations at positions B, D, E, and G on adenosylcobyrinic A,C-diamide. NH(2) groups are provided by glutamine, and one molecule of ATP is hydrogenolyzed for each amidation. This chain is Cobyric acid synthase, found in Salmonella gallinarum (strain 287/91 / NCTC 13346).